The chain runs to 180 residues: Ribosome rescue factor SmrB (180 aa).

One can recognise a Smr domain in the interval 98 to 173 (LDLHGLTQLQ…GNAALLVLVA (76 aa)).

The protein belongs to the SmrB family. In terms of assembly, associates with collided ribosomes, but not with correctly translating polysomes.

Its function is as follows. Acts as a ribosome collision sensor. Detects stalled/collided disomes (pairs of ribosomes where the leading ribosome is stalled and a second ribosome has collided with it) and endonucleolytically cleaves mRNA at the 5' boundary of the stalled ribosome. Stalled/collided disomes form a new interface (primarily via the 30S subunits) that binds SmrB. Cleaved mRNA becomes available for tmRNA ligation, leading to ribosomal subunit dissociation and rescue of stalled ribosomes. The polypeptide is Ribosome rescue factor SmrB (Pectobacterium carotovorum subsp. carotovorum (strain PC1)).